The chain runs to 1201 residues: MSLQFILGSAGQDHRTPMVTALAQQVTAHPTDQSYYLVPNHIKFETEVDVLSALKEQIAPEQALFAQTQVQVFSFTRLAWFFMKNEPIYQLPRISPAGLNMLIYQIIQTHADELTIFRGEVDRPGFVSQLATQLAEFKVGQVTAADLMSAIEQLDTTNTDLQAKLHDLMIIYEAFETQMMGKFVENTDLLNQLATYLEQQVDLQHAHFYLEGFSQLSAQERQLVAILIQRSASVTVALNLDHGYPQKLPDKTTLFFQSAKLYQQLYMVAQANRVPVLIDQQAKTARVSADLQALDTYWQASQTLSPQPSAVEKPTHIQIVQAANRYVEVSRVATQIRQLVATGNYRYRDFLVLTRHLDAYQTVIDPIFQAQAVPYFDDADIRMADHPFVELLNALFDVQRRNYRYADVFRVLKSELLLPRDADGELMAVPAYRQALALTENFVLKNGLEGQHWWTQDKDWVYNRFAVGDGGVQTTRDDQISAQINRIRRFVKQTLPPFFARLKVAATYTDAAAVLYQFVANAGVSERLMTWRDQAIAAGDLTKAGQPEQTWAAFCDILDEFHTILGDLPTVLPDFQALLQAGFAGAKFSQIPSTLDQVVISESGIVQANNRKITFIMGATADTMPDNQIPTTLLADNDRQDLSARLQQVDDGTYLRDDAATQLAGEPYLNYLAFMSGSERLIFSYPAMSDDARSGLQLSPYVARIKDYFGLSIDIAAANPVAEDEAILPFVGTRRTTLRHLVQASHDSQLREVPLSRSWLYVLNLLRTDPTYGELTTKLLGSLSYRNVPTQLTPDIVTQLYGTKINTSISKLEEYYANPYAYFLKYGLNLQERDVFALSPASTGEFFHATLDGLMKLVNDQKLNLAALDDQQLREMTDEVMAKLLDTTENPQFAILESSHRMGYIRQQLMKTMRQMAKTLQEQSKRTKLRPKRTEVQFGLGDERGLAALSFDVGKRRQVTVRGRIDRLDAVQVKDKTYLGIVDYKSSEHKFSYQEAYYGRAMQMLTYLDAVKQNLPTLLDAPTAKDAELAGAVYLHLQNPILKAAEVLGEDPLTSLLKAEQYQGLLLDDPDLLTNLDTLFGTPDYSGSSLLFRGLRRTKTGKITSYGKLLVNSNELDLLLTHTERLIKRAATDIFDGRVDLAPFREQNRTALQYSPYKSVMQFDPLLKENNYRDLPSLNKDDVMARIAAEQEQEATDEHEI.

Belongs to the helicase family. AddB/RexB type 2 subfamily. Heterodimer of AddA and RexB. Requires Mg(2+) as cofactor.

In terms of biological role, the heterodimer acts as both an ATP-dependent DNA helicase and an ATP-dependent, dual-direction single-stranded exonuclease. Recognizes the chi site generating a DNA molecule suitable for the initiation of homologous recombination. This subunit has 5' -&gt; 3' nuclease activity but not helicase activity. This Levilactobacillus brevis (strain ATCC 367 / BCRC 12310 / CIP 105137 / JCM 1170 / LMG 11437 / NCIMB 947 / NCTC 947) (Lactobacillus brevis) protein is ATP-dependent helicase/deoxyribonuclease subunit B.